Consider the following 272-residue polypeptide: Lectin-like protein At1g53070 (272 aa).

An N-terminal signal peptide occupies residues 1 to 23 (MKIQILCFTTLFLAIFTSQVTTA). Residues 24–271 (YKFKFDYFGN…RHEIWDWTFQ (248 aa)) are legume-lectin like. Residues Asn-33, Asn-84, and Asn-134 are each glycosylated (N-linked (GlcNAc...) asparagine). Ser-241 carries the post-translational modification Phosphoserine.

The protein belongs to the leguminous lectin family.

The protein localises to the secreted. The protein resides in the extracellular space. Its subcellular location is the apoplast. The polypeptide is Lectin-like protein At1g53070 (Arabidopsis thaliana (Mouse-ear cress)).